A 156-amino-acid polypeptide reads, in one-letter code: Small ribosomal subunit protein uS7 (156 aa).

This sequence belongs to the universal ribosomal protein uS7 family. As to quaternary structure, part of the 30S ribosomal subunit. Contacts proteins S9 and S11.

In terms of biological role, one of the primary rRNA binding proteins, it binds directly to 16S rRNA where it nucleates assembly of the head domain of the 30S subunit. Is located at the subunit interface close to the decoding center, probably blocks exit of the E-site tRNA. This Clostridium novyi (strain NT) protein is Small ribosomal subunit protein uS7.